The sequence spans 216 residues: Dimethylamine corrinoid protein 1 (216 aa).

In terms of domain architecture, B12-binding N-terminal spans 1 to 91 (MTSKEELLQE…DMPAGTETKK (91 aa)). The region spanning 92 to 216 (LGVIVNGTVE…AKAKELLVGK (125 aa)) is the B12-binding domain. Residue histidine 105 coordinates methylcob(III)alamin.

This sequence belongs to the methylamine corrinoid protein family.

Its pathway is one-carbon metabolism; methanogenesis from dimethylamine. Its function is as follows. Acts as a methyl group carrier between MtbB and MtbA. The chain is Dimethylamine corrinoid protein 1 (mtbC1) from Methanosarcina mazei (strain ATCC BAA-159 / DSM 3647 / Goe1 / Go1 / JCM 11833 / OCM 88) (Methanosarcina frisia).